We begin with the raw amino-acid sequence, 555 residues long: CTP synthase (555 aa).

The tract at residues 1–279 is amidoligase domain; the sequence is MATNRAKSST…DNYIIRRLNL (279 aa). Position 21 (Ser21) interacts with CTP. Ser21 lines the UTP pocket. ATP-binding positions include 22-27 and Asp79; that span reads SLGKGL. The Mg(2+) site is built by Asp79 and Glu153. CTP-binding positions include 160–162, 200–205, and Lys236; these read DIE and KTKPTQ. Residues 200–205 and Lys236 each bind UTP; that span reads KTKPTQ. One can recognise a Glutamine amidotransferase type-1 domain in the interval 304-553; sequence TIGIVGKYID…VDAALKHQAG (250 aa). Gly367 serves as a coordination point for L-glutamine. The Nucleophile; for glutamine hydrolysis role is filled by Cys394. L-glutamine contacts are provided by residues 395 to 398, Glu417, and Arg478; that span reads LGLQ. Residues His526 and Glu528 contribute to the active site.

This sequence belongs to the CTP synthase family. As to quaternary structure, homotetramer.

The enzyme catalyses UTP + L-glutamine + ATP + H2O = CTP + L-glutamate + ADP + phosphate + 2 H(+). It carries out the reaction L-glutamine + H2O = L-glutamate + NH4(+). The catalysed reaction is UTP + NH4(+) + ATP = CTP + ADP + phosphate + 2 H(+). Its pathway is pyrimidine metabolism; CTP biosynthesis via de novo pathway; CTP from UDP: step 2/2. Its activity is regulated as follows. Allosterically activated by GTP, when glutamine is the substrate; GTP has no effect on the reaction when ammonia is the substrate. The allosteric effector GTP functions by stabilizing the protein conformation that binds the tetrahedral intermediate(s) formed during glutamine hydrolysis. Inhibited by the product CTP, via allosteric rather than competitive inhibition. In terms of biological role, catalyzes the ATP-dependent amination of UTP to CTP with either L-glutamine or ammonia as the source of nitrogen. Regulates intracellular CTP levels through interactions with the four ribonucleotide triphosphates. This Corynebacterium jeikeium (strain K411) protein is CTP synthase.